The chain runs to 211 residues: Imidazole glycerol phosphate synthase subunit HisH (211 aa).

A Glutamine amidotransferase type-1 domain is found at 3–211; the sequence is VIAVVDYEMG…VAQVREKIPA (209 aa). The active-site Nucleophile is C81. Catalysis depends on residues H186 and E188.

As to quaternary structure, heterodimer of HisH and HisF.

Its subcellular location is the cytoplasm. It catalyses the reaction 5-[(5-phospho-1-deoxy-D-ribulos-1-ylimino)methylamino]-1-(5-phospho-beta-D-ribosyl)imidazole-4-carboxamide + L-glutamine = D-erythro-1-(imidazol-4-yl)glycerol 3-phosphate + 5-amino-1-(5-phospho-beta-D-ribosyl)imidazole-4-carboxamide + L-glutamate + H(+). The enzyme catalyses L-glutamine + H2O = L-glutamate + NH4(+). It functions in the pathway amino-acid biosynthesis; L-histidine biosynthesis; L-histidine from 5-phospho-alpha-D-ribose 1-diphosphate: step 5/9. In terms of biological role, IGPS catalyzes the conversion of PRFAR and glutamine to IGP, AICAR and glutamate. The HisH subunit catalyzes the hydrolysis of glutamine to glutamate and ammonia as part of the synthesis of IGP and AICAR. The resulting ammonia molecule is channeled to the active site of HisF. The chain is Imidazole glycerol phosphate synthase subunit HisH from Nostoc punctiforme (strain ATCC 29133 / PCC 73102).